An 812-amino-acid chain; its full sequence is MYEGKHIHFSEVDNKPLCSYSPKLCKQRRLNGYAFCIRHVLEDKTAPFKQCEYVAKYNSQRCTNPIPKSEDRRYCNSHLQVLGFIPKKERKKKNDALEDVKTKHQMETMAFSLTVPPLALKMPNGHDGLNLSPPGARLPIHYLETDLEDPFSFEEEEEELKKGTSVKKKLQSKLAQNWQRLRETEIVNVHQEHFSPHPAHSPLQSPSLQEQHTLVQPISTLPKPTGLPQNLVCKSPQPSNISQPVQGASPVTHTVAQTRHQSSKRPFPVLPPVTELPRNDRIQLAATALPAYSSYVSRLQRLVKLCTRKQQLDTDLFPHFGLDWSEDSGEEQEDSDQSSPYRTAWSFRESFRYDCKKLDIEEAHSRSSRIAQLCTYFQQKYKHLCRLERAESCQKKYRHTFRRALQQAAHRESETTGQLLQELRTTTCIRTRPIQPELRGTEVTLCSATISNGACRNRALPYTRNCFQHILSNSSQQLFSSCTAKFADGQQCSVPVFDITHQTPLCEEHAKKMDNFLRGDNSRKVQHHQQRKPRKKTKPPALTKKTKKKRRRGPRRPQKPIPPAVPQGNLCMPSSLSLPVEVSSIRSPSTPNLSTEELPDDITSEITDIPHDLELNQEDFSDVLPRLPDDLQDFDFFEGKNGDLLPTTEEAEELERALQAVTSLECLSSIAVLTQADNATGQDLSDRGISAFSTGSGGSVIQSLSREDHPDLGDLLNGHIGHNFASLELDENLLGSTTLSNPSATLSGHIQGQFSSPANVGLSSATLISRSGERLGREVMSHHVDAAAPILDKQRVSGALYSGMVKHSAEWV.

Disordered regions lie at residues 521–573 and 581–600; these read NSRK…LCMP and EVSS…ELPD. The segment covering 524-558 has biased composition (basic residues); that stretch reads KVQHHQQRKPRKKTKPPALTKKTKKKRRRGPRRPQ. A compositionally biased stretch (polar residues) spans 585 to 595; the sequence is IRSPSTPNLST.

This sequence belongs to the INO80D family. Component of the chromatin-remodeling INO80 complex.

Its subcellular location is the nucleus. In terms of biological role, putative regulatory component of the chromatin remodeling INO80 complex which is involved in transcriptional regulation, DNA replication and probably DNA repair. The sequence is that of INO80 complex subunit D from Xenopus laevis (African clawed frog).